We begin with the raw amino-acid sequence, 239 residues long: MTLTRKTLFLLTAAFGTHSLQTASADAVVKAEKLHASANRSYKVAGKRYTPKNQVAEFTQTGNASWYGGRFHGRKTSGGERYDMNAFTAAHKTLPIPSYVRVTNTKNGKSVIVRVNDRGPFHGNRIIDVSKAAAQKLGFVNQGTAHVKIEQIVPGQSAPVAENKDIFIDLKSFGTEHEAQAYLNQAAQNFAVSSSGTNLSVEKRRYEYVVKMGPFTSQERAAEAEAQARGMVRAVLTAG.

Positions 1–25 are cleaved as a signal peptide; the sequence is MTLTRKTLFLLTAAFGTHSLQTASA. One can recognise an SPOR domain in the interval 160 to 239; sequence VAENKDIFID…GMVRAVLTAG (80 aa).

The protein belongs to the RlpA family.

In terms of biological role, lytic transglycosylase with a strong preference for naked glycan strands that lack stem peptides. The chain is Endolytic peptidoglycan transglycosylase RlpA from Neisseria meningitidis serogroup B (strain ATCC BAA-335 / MC58).